We begin with the raw amino-acid sequence, 408 residues long: MIPPEPPQPQLQPPPPPAPPNHVVTTIENLPAEGSGGVSLSASSRASMRQRIRKVLNREMLISVALGQVLSLLVCGIGLTSKYLAEDFHANTPVFQSFLNYILLFLVYTTTLAVRQGEENLLAILRRRWWKYMILGLIDLEANYLVVKAYQYTTLTSVQLLDCFVIPVVILLSWFFLLIRYKAVHFIGIVVCILGMGCMVGADVLVGRHQGAGENKLVGDLLVLGGATLYGISNVWEESIIRTLSRVEFLGMIGLFGAFFSGIQLAIMEHKELLKVPWDWQIGLLYVGFSACMFGLYSFMPVVIKKTSATSVNLSLLTADLYSLFCGLFLFHYKFSGLYLLSFFTILIGLVLYSSTSTYIAQDPRVYKQFRNPSGPVVDLPSTAQVEPSVTYTSLGQETEEEPHVRVA.

The disordered stretch occupies residues 1-20 (MIPPEPPQPQLQPPPPPAPP). The next 10 membrane-spanning stretches (helical) occupy residues 60–80 (MLISVALGQVLSLLVCGIGLT), 94–114 (VFQSFLNYILLFLVYTTTLAV), 129–147 (WWKYMILGLIDLEANYLVV), 159–179 (QLLDCFVIPVVILLSWFFLLI), 186–206 (FIGIVVCILGMGCMVGADVLV), 221–241 (LLVLGGATLYGISNVWEESII), 247–267 (VEFLGMIGLFGAFFSGIQLAI), 284–304 (LLYVGFSACMFGLYSFMPVVI), 311–331 (SVNLSLLTADLYSLFCGLFLF), and 335–355 (FSGLYLLSFFTILIGLVLYSS).

It belongs to the SLC35F solute transporter family.

The protein resides in the cytoplasmic vesicle. The protein localises to the secretory vesicle. It localises to the synaptic vesicle membrane. Functionally, putative solute transporter. The polypeptide is Solute carrier family 35 member F1 (Slc35f1) (Mus musculus (Mouse)).